We begin with the raw amino-acid sequence, 285 residues long: Probable adenylate kinase 6, chloroplastic (285 aa).

The transit peptide at 1–33 (MAAISRAIRACAAAGSRRSMASSAKEVAAAGAR) directs the protein to the chloroplast. 63–68 (GVGKGT) serves as a coordination point for ATP. An NMP region spans residues 83 to 112 (ATGDLVRDALASPGPFSEQLAEIVNNGKLV). AMP contacts are provided by residues T84, R89, 110–112 (KLV), 140–143 (GFPR), and Q147. The tract at residues 176 to 224 (GRRMCSQCGGNFNVASIDMEGENGGPRMYMPPLLPPPQCESKLITRPDD) is LID. ATP-binding positions include R177 and 186-187 (NF). Residues R221 and R232 each contribute to the AMP site.

It belongs to the adenylate kinase family.

It localises to the plastid. It is found in the chloroplast. The catalysed reaction is AMP + ATP = 2 ADP. Its function is as follows. Catalyzes the reversible transfer of the terminal phosphate group between ATP and AMP. Plays an important role in cellular energy homeostasis and in adenine nucleotide metabolism. In Oryza sativa subsp. japonica (Rice), this protein is Probable adenylate kinase 6, chloroplastic.